A 189-amino-acid chain; its full sequence is MTDKTEKVAVDPETVFKRPRECDSPSYQKRQRMALLARKQGAGDSLIAGSAMSKEKKLMTGHAIPPSQLDSQIDDFTGFSKDGMMQKPGSNAPVGGNVTSSFSGDDLECRETASSPKSQREINADIKRKLVKELRCVGQKYEKIFEMLEGVQGPTAVRKRFFESIIKEAARCMRRDFVKHLKKKLKRMI.

The span at 1 to 23 shows a compositional bias: basic and acidic residues; sequence MTDKTEKVAVDPETVFKRPRECD. 2 disordered regions span residues 1–27 and 82–118; these read MTDK…SPSY and DGMM…SPKS.

The protein belongs to the CT45 family. In terms of tissue distribution, testis specific. Expressed in cancer cell lines.

The protein localises to the nucleus. The chain is Cancer/testis antigen family 45 member A5 from Homo sapiens (Human).